We begin with the raw amino-acid sequence, 407 residues long: uncharacterized protein (407 aa).

The segment at 145–231 is disordered; that stretch reads EANRFGRSNS…DPLTSITSDT (87 aa). Positions 158–175 are enriched in basic residues; it reads SNSRSKSSRSRSNNRSKS. The segment covering 176–196 has biased composition (low complexity); sequence SRSSSTQSKSNNRSNSRSNSK. Residues 271–407 form the N-acetyltransferase domain; sequence IVFETLDQND…NHKIHMEKDI (137 aa).

It is found in the virion. This is an uncharacterized protein from Acanthamoeba polyphaga (Amoeba).